The chain runs to 926 residues: Lipoxygenase 4, chloroplastic (926 aa).

A chloroplast-targeting transit peptide spans 1–58 (MALANEIMGSRLIFERSSSLASPFHSRFSIKKKTQRTQFSINPFDPRPMRAVNSSGVV). One can recognise a PLAT domain in the interval 106-228 (FKETLVKHLD…DHPSKRILFT (123 aa)). The Lipoxygenase domain maps to 231-926 (PYLPSETPSG…CRGVPNSVSI (696 aa)). Fe cation is bound by residues His-585, His-590, His-777, Asn-781, and Ile-926.

It belongs to the lipoxygenase family. It depends on Fe cation as a cofactor. In terms of tissue distribution, expressed in leaves.

The protein resides in the plastid. It is found in the chloroplast. The enzyme catalyses (9Z,12Z)-octadecadienoate + O2 = (13S)-hydroperoxy-(9Z,11E)-octadecadienoate. It catalyses the reaction (9Z,12Z,15Z)-octadecatrienoate + O2 = (13S)-hydroperoxy-(9Z,11E,15Z)-octadecatrienoate. It participates in lipid metabolism; oxylipin biosynthesis. Its function is as follows. Plant lipoxygenases may be involved in a number of diverse aspects of plant physiology including growth and development, pest resistance, and senescence or responses to wounding. Catalyzes the hydroperoxidation of lipids containing a cis,cis-1,4-pentadiene structure. 13S-lipoxygenase that can use linolenic acid as substrates. The chain is Lipoxygenase 4, chloroplastic (LOX4) from Arabidopsis thaliana (Mouse-ear cress).